We begin with the raw amino-acid sequence, 673 residues long: UvrABC system protein B (673 aa).

A Helicase ATP-binding domain is found at 26-183; it reads EGLEDGLAHQ…RRLAELQYTR (158 aa). 39-46 is a binding site for ATP; sequence GVTGSGKT. Positions 92–115 match the Beta-hairpin motif; that stretch reads YYDYYQPEAYVPSSDTFIEKDASV. Residues 431-597 form the Helicase C-terminal domain; the sequence is QVDDLLSEIR…GLNKKVVDIL (167 aa). Residues 633–668 enclose the UVR domain; it reads QQKIHELEGQMMQHAQNLEFEEAAEIRDQLHQLREL.

Belongs to the UvrB family. As to quaternary structure, forms a heterotetramer with UvrA during the search for lesions. Interacts with UvrC in an incision complex.

Its subcellular location is the cytoplasm. Its function is as follows. The UvrABC repair system catalyzes the recognition and processing of DNA lesions. A damage recognition complex composed of 2 UvrA and 2 UvrB subunits scans DNA for abnormalities. Upon binding of the UvrA(2)B(2) complex to a putative damaged site, the DNA wraps around one UvrB monomer. DNA wrap is dependent on ATP binding by UvrB and probably causes local melting of the DNA helix, facilitating insertion of UvrB beta-hairpin between the DNA strands. Then UvrB probes one DNA strand for the presence of a lesion. If a lesion is found the UvrA subunits dissociate and the UvrB-DNA preincision complex is formed. This complex is subsequently bound by UvrC and the second UvrB is released. If no lesion is found, the DNA wraps around the other UvrB subunit that will check the other stand for damage. The sequence is that of UvrABC system protein B from Citrobacter koseri (strain ATCC BAA-895 / CDC 4225-83 / SGSC4696).